We begin with the raw amino-acid sequence, 634 residues long: uncharacterized protein (634 aa).

A signal peptide spans 1–40; it reads MWLQQRLKGLPGLLSSSWARRLLCLLGLLLLLLWFGGSGA. Residues 41–589 lie on the Extracellular side of the membrane; sequence RRAAGGLHLL…DEHMAQQDPG (549 aa). An N-linked (GlcNAc...) asparagine glycan is attached at N363. Residues 590–610 form a helical membrane-spanning segment; the sequence is LPFLFWFSVASLITLFHLFLF. At 611 to 634 the chain is on the cytoplasmic side; it reads KLIYNEYCGPGAKPLFRSKEDPSV.

The protein resides in the membrane. This is an uncharacterized protein from Homo sapiens (Human).